A 90-amino-acid chain; its full sequence is Protein LURE 1.4 (90 aa).

The first 19 residues, Met1–Ser19, serve as a signal peptide directing secretion. The N-linked (GlcNAc...) asparagine glycan is linked to Asn23. Intrachain disulfides connect Cys58-Cys75, Cys61-Cys82, and Cys65-Cys84. Residues Arg67–Ser87 are PRK6 binding.

It belongs to the DEFL family. In terms of assembly, binds to PRK6 LRRs. As to expression, expressed in the pistil. Detected exclusively in the synergid cells.

Its subcellular location is the secreted. Functionally, pollen tube attractants guiding pollen tubes to the ovular micropyle. This is Protein LURE 1.4 from Arabidopsis thaliana (Mouse-ear cress).